Reading from the N-terminus, the 110-residue chain is Iron-sulfur cluster assembly protein CyaY (110 aa).

This sequence belongs to the frataxin family.

Its function is as follows. Involved in iron-sulfur (Fe-S) cluster assembly. May act as a regulator of Fe-S biogenesis. The polypeptide is Iron-sulfur cluster assembly protein CyaY (Variovorax paradoxus (strain S110)).